Consider the following 102-residue polypeptide: Small ribosomal subunit protein uS10 (102 aa).

Belongs to the universal ribosomal protein uS10 family. In terms of assembly, part of the 30S ribosomal subunit.

Its function is as follows. Involved in the binding of tRNA to the ribosomes. The polypeptide is Small ribosomal subunit protein uS10 (Methanocorpusculum labreanum (strain ATCC 43576 / DSM 4855 / Z)).